Here is a 291-residue protein sequence, read N- to C-terminus: Bis(5'-nucleosyl)-tetraphosphatase, symmetrical (291 aa).

Belongs to the Ap4A hydrolase family.

The catalysed reaction is P(1),P(4)-bis(5'-adenosyl) tetraphosphate + H2O = 2 ADP + 2 H(+). Its function is as follows. Hydrolyzes diadenosine 5',5'''-P1,P4-tetraphosphate to yield ADP. The sequence is that of Bis(5'-nucleosyl)-tetraphosphatase, symmetrical from Pseudomonas syringae pv. syringae (strain B728a).